Here is a 264-residue protein sequence, read N- to C-terminus: Thymidylate synthase (264 aa).

Arg-21 provides a ligand contact to dUMP. His-51 serves as a coordination point for (6R)-5,10-methylene-5,6,7,8-tetrahydrofolate. A dUMP-binding site is contributed by Arg-126–Arg-127. The active-site Nucleophile is Cys-146. DUMP is bound by residues Arg-166–Asp-169, Asn-177, and His-207–Tyr-209. Residue Asp-169 coordinates (6R)-5,10-methylene-5,6,7,8-tetrahydrofolate. Residue Ala-263 participates in (6R)-5,10-methylene-5,6,7,8-tetrahydrofolate binding.

This sequence belongs to the thymidylate synthase family. Bacterial-type ThyA subfamily. As to quaternary structure, homodimer.

It localises to the cytoplasm. The enzyme catalyses dUMP + (6R)-5,10-methylene-5,6,7,8-tetrahydrofolate = 7,8-dihydrofolate + dTMP. The protein operates within pyrimidine metabolism; dTTP biosynthesis. Functionally, catalyzes the reductive methylation of 2'-deoxyuridine-5'-monophosphate (dUMP) to 2'-deoxythymidine-5'-monophosphate (dTMP) while utilizing 5,10-methylenetetrahydrofolate (mTHF) as the methyl donor and reductant in the reaction, yielding dihydrofolate (DHF) as a by-product. This enzymatic reaction provides an intracellular de novo source of dTMP, an essential precursor for DNA biosynthesis. In Shewanella baltica (strain OS185), this protein is Thymidylate synthase.